Consider the following 445-residue polypeptide: MTRSANSPFEVAIVGGGITGLALAVGLLKRNVSFTIYERAENFGELGVGITFTPNAQRAMEALDPCVLQSFTNVASAPSGGTINFVDGVREQGSEDPRTSTAALLFQLHVKGGYKACRRCDFVDQIVQHIPKDCVQYRKWLDSIETDHESGRAVLKFRDGEIAHADVVIGCDGIRSQVRASMFGTDELCPRAQYSHQLGYRGMVPLAQATAVLGPEKTSSAVLHTGPGAFVLTIPLAEVHAMHIEAFIMDKEEWPEVQTSSDSKRYVLPATRNEATKAFAEFGPTVRSAVSMFPEKLEKWAVFDMLEAPVPTFAKGRVCLAGDAAHASTPNQGGGAGFGIEDALVLAEVLAVLAEAPNVSGIVASEALAVYSEVRYERSQWLVRSSRRTGELCTWKDRDWGLAAEELSRDIISRSHQLWDHDTAGMVSDALAILGERVRGADTAF.

Residues 8-28 traverse the membrane as a helical segment; the sequence is PFEVAIVGGGITGLALAVGLL. N-linked (GlcNAc...) asparagine glycosylation occurs at N31. E38 and R119 together coordinate FAD. R201 is an active-site residue. The FAD site is built by D323 and A336. N358 carries an N-linked (GlcNAc...) asparagine glycan.

This sequence belongs to the paxM FAD-dependent monooxygenase family. FAD is required as a cofactor.

The protein resides in the membrane. It functions in the pathway secondary metabolite biosynthesis. Functionally, FAD-dependent monooxygenase; part of the gene cluster that mediates the biosynthesis of sorbicillinoids, a diverse group of yellow secondary metabolites that restrict growth of competing pathogenic fungi but not of bacteria. Sorbicillinoids biosynthesis requires the action of two PKSs. SorA iteratively combines three acetyl units and the growing chain is modified by the ketoacyl reductase subunit, and optional by the enoyl reductase subunit in the second cycle. The polyketide is then handed over to the PKS SorB, which adds three more acetyl units, and two methyl groups. SorB releases an aldehyde, which undergoes spontaneous cyclization resulting in the formation of sorbicillin or 2',3'-dihydrosorbicillin. The monooxygenase sorC oxidizes sorbicillin and 2',3'-dihydrosorbicillin to 2',3'-dihydrosorbicillinol and sorbicillinol, respectively. The oxidoreductase sorD further converts sorbicillinol into oxosorbicillinol. Sorbicillinol is the building block for the other sorbicillinoids such as disorbicillinol, bisvertinolon, and dihydrobisvertinolone. The sequence is that of FAD-dependent monooxygenase sorC from Penicillium rubens (strain ATCC 28089 / DSM 1075 / NRRL 1951 / Wisconsin 54-1255) (Penicillium chrysogenum).